The sequence spans 224 residues: Ribosomal RNA small subunit methyltransferase I (224 aa).

The protein belongs to the methyltransferase superfamily. RsmI family.

It is found in the cytoplasm. It carries out the reaction cytidine(1402) in 16S rRNA + S-adenosyl-L-methionine = 2'-O-methylcytidine(1402) in 16S rRNA + S-adenosyl-L-homocysteine + H(+). Catalyzes the 2'-O-methylation of the ribose of cytidine 1402 (C1402) in 16S rRNA. This is Ribosomal RNA small subunit methyltransferase I from Borrelia garinii subsp. bavariensis (strain ATCC BAA-2496 / DSM 23469 / PBi) (Borreliella bavariensis).